The sequence spans 360 residues: Peptide chain release factor 1 (360 aa).

At Q235 the chain carries N5-methylglutamine.

It belongs to the prokaryotic/mitochondrial release factor family. Post-translationally, methylated by PrmC. Methylation increases the termination efficiency of RF1.

It is found in the cytoplasm. Its function is as follows. Peptide chain release factor 1 directs the termination of translation in response to the peptide chain termination codons UAG and UAA. This chain is Peptide chain release factor 1, found in Burkholderia pseudomallei (strain 1106a).